Here is a 394-residue protein sequence, read N- to C-terminus: Cell division protein FtsZ (394 aa).

Residues 21-25 (GGGNN), 108-110 (GTG), Glu139, Arg143, and Asp187 contribute to the GTP site. The tract at residues 317–394 (DKPSSQGRKA…EERRSRRTRR (78 aa)) is disordered. Low complexity-rich tracts occupy residues 328–346 (STGF…SGAS) and 353–364 (SAHTSHSQSSES). The span at 365–388 (VNERSHTTKDDDIPSFIRNREERR) shows a compositional bias: basic and acidic residues.

The protein belongs to the FtsZ family. In terms of assembly, homodimer. Polymerizes to form a dynamic ring structure in a strictly GTP-dependent manner. Interacts directly with several other division proteins.

It is found in the cytoplasm. Essential cell division protein that forms a contractile ring structure (Z ring) at the future cell division site. The regulation of the ring assembly controls the timing and the location of cell division. One of the functions of the FtsZ ring is to recruit other cell division proteins to the septum to produce a new cell wall between the dividing cells. Binds GTP and shows GTPase activity. The protein is Cell division protein FtsZ of Staphylococcus epidermidis (strain ATCC 12228 / FDA PCI 1200).